Consider the following 169-residue polypeptide: Methanogen homoaconitase small subunit (169 aa).

Residues Y27–T30 carry the YLRT motif.

This sequence belongs to the LeuD family. LeuD type 2 subfamily. In terms of assembly, heterotetramer of 2 HacA and 2 HacB proteins.

The enzyme catalyses (2R)-homocitrate = (2R,3S)-homoisocitrate. It catalyses the reaction (2R)-homocitrate = cis-homoaconitate + H2O. It carries out the reaction (2R,3S)-homoisocitrate = cis-homoaconitate + H2O. The catalysed reaction is cis-(homo)2aconitate + H2O = (2R,3S)-iso(homo)2citrate. The enzyme catalyses cis-(homo)3aconitate + H2O = (2R,3S)-iso(homo)3citrate. The protein operates within organic acid metabolism; 2-oxosuberate biosynthesis. Functionally, component of a hydro-lyase with broad substrate specificity for cis-unsaturated tricarboxylic acids. Catalyzes both the reversible dehydration of (R)-homocitrate ((R)-2-hydroxybutane-1,2,4-tricarboxylate) to produce cis-homoaconitate ((Z)-but-1-ene-1,2,4-tricarboxylate), and its hydration to homoisocitrate ((1R,2S)-1-hydroxybutane-1,2,4-tricarboxylate). Is also able to hydrate the analogous longer chain substrates cis-homo(2)-aconitate, cis-homo(3)-aconitate. These reactions are part of the biosynthesis pathway of coenzyme B. In Methanosarcina mazei (strain ATCC BAA-159 / DSM 3647 / Goe1 / Go1 / JCM 11833 / OCM 88) (Methanosarcina frisia), this protein is Methanogen homoaconitase small subunit (hacB).